Reading from the N-terminus, the 233-residue chain is 7-cyano-7-deazaguanine synthase (233 aa).

7–17 (LSGGLDSAVTS) contributes to the ATP binding site. Residues Cys-195, Cys-206, Cys-209, and Cys-212 each contribute to the Zn(2+) site.

It belongs to the QueC family. Zn(2+) serves as cofactor.

It catalyses the reaction 7-carboxy-7-deazaguanine + NH4(+) + ATP = 7-cyano-7-deazaguanine + ADP + phosphate + H2O + H(+). Its pathway is purine metabolism; 7-cyano-7-deazaguanine biosynthesis. Catalyzes the ATP-dependent conversion of 7-carboxy-7-deazaguanine (CDG) to 7-cyano-7-deazaguanine (preQ(0)). This Methanococcus maripaludis (strain C5 / ATCC BAA-1333) protein is 7-cyano-7-deazaguanine synthase.